Consider the following 69-residue polypeptide: Brevinin-1CG5 (69 aa).

The signal sequence occupies residues 1 to 22; sequence MFTLKKSLLLLFFLGTINLSLC. Positions 23-43 are cleaved as a propeptide — removed in mature form; that stretch reads EQERNAEEERRDDDEMDVEVE. A disulfide bridge connects residues C63 and C69.

This sequence belongs to the frog skin active peptide (FSAP) family. Brevinin subfamily. As to expression, expressed by the skin glands.

The protein resides in the secreted. In terms of biological role, antimicrobial peptide active against a variety of Gram-positive and Gram-negative bacterial strains. Has antifungal activity against C.albicans ATCC 10231 and a slime mold isolate. Has hemolytic activity against human erythrocytes. In Amolops chunganensis (Chungan torrent frog), this protein is Brevinin-1CG5.